A 444-amino-acid chain; its full sequence is 23S rRNA (uracil(1939)-C(5))-methyltransferase RlmD (444 aa).

Positions 5–67 (RSRIDRTPFQ…RHFDEARTVE (63 aa)) constitute a TRAM domain. The [4Fe-4S] cluster site is built by Cys80, Cys86, Cys89, and Cys168. Residues Gln276, Phe305, Asn310, Glu326, Asp353, and Asp374 each coordinate S-adenosyl-L-methionine. Catalysis depends on Cys400, which acts as the Nucleophile.

Belongs to the class I-like SAM-binding methyltransferase superfamily. RNA M5U methyltransferase family. RlmD subfamily.

It carries out the reaction uridine(1939) in 23S rRNA + S-adenosyl-L-methionine = 5-methyluridine(1939) in 23S rRNA + S-adenosyl-L-homocysteine + H(+). Catalyzes the formation of 5-methyl-uridine at position 1939 (m5U1939) in 23S rRNA. The sequence is that of 23S rRNA (uracil(1939)-C(5))-methyltransferase RlmD from Stenotrophomonas maltophilia (strain R551-3).